The chain runs to 427 residues: Peptidase B (427 aa).

The Mn(2+) site is built by Lys-195 and Asp-200. Residue Lys-207 is part of the active site. The Mn(2+) site is built by Asp-218, Asp-277, and Glu-279. Residue Arg-281 is part of the active site.

Belongs to the peptidase M17 family. Homohexamer. The cofactor is Mn(2+).

The protein resides in the cytoplasm. The catalysed reaction is Release of an N-terminal amino acid, Xaa, from a peptide or arylamide. Xaa is preferably Glu or Asp but may be other amino acids, including Leu, Met, His, Cys and Gln.. In terms of biological role, probably plays an important role in intracellular peptide degradation. This is Peptidase B from Shigella flexneri.